The sequence spans 111 residues: N-alpha-acetyltransferase 38-B, NatC auxiliary subunit (111 aa).

The Sm domain occupies 28–106; it reads TARHKLESLL…IVSIQVELET (79 aa).

Belongs to the snRNP Sm proteins family. Component of the N-terminal acetyltransferase C (NatC) complex, which is composed of naa35, naa38 and naa30.

It localises to the cytoplasm. Functionally, auxillary component of the N-terminal acetyltransferase C (NatC) complex which catalyzes acetylation of N-terminal methionine residues. This is N-alpha-acetyltransferase 38-B, NatC auxiliary subunit (naa38-b) from Xenopus laevis (African clawed frog).